Reading from the N-terminus, the 239-residue chain is Tetraspanin-9 (239 aa).

Residues 1 to 13 are Cytoplasmic-facing; that stretch reads MARGCLCCVKYMM. The chain crosses the membrane as a helical span at residues 14–34; the sequence is FLFNLLFWLSGCGLLGVGIWL. Topologically, residues 35–55 are extracellular; that stretch reads SVSQGSFATFSPSFPSLSAAN. The helical transmembrane segment at 56–76 threads the bilayer; it reads LVITLGSVVMVTGFLGCLGAI. Topologically, residues 77-85 are cytoplasmic; it reads KENKCLLLS. A helical membrane pass occupies residues 86 to 106; it reads FFIVLLIILLAELILLILFFV. Topologically, residues 107–203 are extracellular; the sequence is YTEKVSENAK…VEEWLNDNKH (97 aa). Asparagine 180 carries an N-linked (GlcNAc...) asparagine glycan. Residues 204–224 traverse the membrane as a helical segment; it reads LLGTIAMCVLVLQLLGMAFSM. Over 225-239 the chain is Cytoplasmic; the sequence is TLYQQIHRAGKKYDA.

It belongs to the tetraspanin (TM4SF) family.

The protein localises to the membrane. This chain is Tetraspanin-9 (tspan9), found in Danio rerio (Zebrafish).